A 329-amino-acid chain; its full sequence is GMP reductase (329 aa).

Residue cysteine 178 is the Thioimidate intermediate of the active site. 207–230 (IIADGGIRNNGDIAKSIRFGATMC) is an NADP(+) binding site.

Belongs to the IMPDH/GMPR family. GuaC type 2 subfamily.

It catalyses the reaction IMP + NH4(+) + NADP(+) = GMP + NADPH + 2 H(+). Functionally, catalyzes the irreversible NADPH-dependent deamination of GMP to IMP. It functions in the conversion of nucleobase, nucleoside and nucleotide derivatives of G to A nucleotides, and in maintaining the intracellular balance of A and G nucleotides. The sequence is that of GMP reductase from Lacticaseibacillus paracasei (strain ATCC 334 / BCRC 17002 / CCUG 31169 / CIP 107868 / KCTC 3260 / NRRL B-441) (Lactobacillus paracasei).